We begin with the raw amino-acid sequence, 227 residues long: MATWSNFNLQNSASPLMEQIIFFHDHTLVILIMITILVGYLMISLFFNSYINRFLLEGQMIELIWTILPAITLIFIALPSLRLLYLLDELNNPLITLKSIGHQWYWSYEYSDFQNIQFDSYMIPINEMKNNNFRLLDVDNRIVLPMNNQIRILVTATDVIHSWTIPSLGVKVDANPGRLNQTNFFINRPGIFYGQCSEICGANHSFMPIVIESISIKNFINWINNYS.

Residues 1-26 (MATWSNFNLQNSASPLMEQIIFFHDH) lie on the Mitochondrial intermembrane side of the membrane. The helical transmembrane segment at 27 to 51 (TLVILIMITILVGYLMISLFFNSYI) threads the bilayer. At 52–62 (NRFLLEGQMIE) the chain is on the mitochondrial matrix side. The helical transmembrane segment at 63 to 81 (LIWTILPAITLIFIALPSL) threads the bilayer. The Mitochondrial intermembrane portion of the chain corresponds to 82–227 (RLLYLLDELN…NFINWINNYS (146 aa)). Cu cation contacts are provided by His161, Cys196, Glu198, Cys200, His204, and Met207. Glu198 lines the Mg(2+) pocket.

This sequence belongs to the cytochrome c oxidase subunit 2 family. Component of the cytochrome c oxidase (complex IV, CIV), a multisubunit enzyme composed of a catalytic core of 3 subunits and several supernumerary subunits. The complex exists as a monomer or a dimer and forms supercomplexes (SCs) in the inner mitochondrial membrane with ubiquinol-cytochrome c oxidoreductase (cytochrome b-c1 complex, complex III, CIII). Requires Cu cation as cofactor.

The protein localises to the mitochondrion inner membrane. It carries out the reaction 4 Fe(II)-[cytochrome c] + O2 + 8 H(+)(in) = 4 Fe(III)-[cytochrome c] + 2 H2O + 4 H(+)(out). Its function is as follows. Component of the cytochrome c oxidase, the last enzyme in the mitochondrial electron transport chain which drives oxidative phosphorylation. The respiratory chain contains 3 multisubunit complexes succinate dehydrogenase (complex II, CII), ubiquinol-cytochrome c oxidoreductase (cytochrome b-c1 complex, complex III, CIII) and cytochrome c oxidase (complex IV, CIV), that cooperate to transfer electrons derived from NADH and succinate to molecular oxygen, creating an electrochemical gradient over the inner membrane that drives transmembrane transport and the ATP synthase. Cytochrome c oxidase is the component of the respiratory chain that catalyzes the reduction of oxygen to water. Electrons originating from reduced cytochrome c in the intermembrane space (IMS) are transferred via the dinuclear copper A center (CU(A)) of subunit 2 and heme A of subunit 1 to the active site in subunit 1, a binuclear center (BNC) formed by heme A3 and copper B (CU(B)). The BNC reduces molecular oxygen to 2 water molecules using 4 electrons from cytochrome c in the IMS and 4 protons from the mitochondrial matrix. In Choristoneura fumiferana (Spruce budworm moth), this protein is Cytochrome c oxidase subunit 2 (COII).